A 412-amino-acid chain; its full sequence is Putative odorant receptor 85d (412 aa).

Residues 1 to 56 (MLTKKDTQSAKEQEKLKAIPLHSFLKYANVFYLSIGMMAYDHKYSQKWKEVLLHWT) are Cytoplasmic-facing. Residues 57–77 (FIAQMVNLNTVLISELIYVFL) traverse the membrane as a helical segment. Topologically, residues 78–84 (AIGKGSN) are extracellular. Residues 85–105 (FLEATMNLSFIGFVIVGDFKI) form a helical membrane-spanning segment. The Cytoplasmic segment spans residues 106–152 (WNISRQRKRLTQVVSRLEELHPQGLAQQEPYNIGHHLSGYSRYSKFY). The chain crosses the membrane as a helical span at residues 153–173 (FGMHMVLIWTYNLYWAVYYLV). Residues 174-219 (CDFWLGMRQFERMLPYYCWVPWDWSTGYSYYFMYISQNIGGQACLS) are Extracellular-facing. Residues 220 to 240 (GQLAADMLMCALVTLVVMHFI) traverse the membrane as a helical segment. The Cytoplasmic segment spans residues 241 to 282 (RLSAHIESHVAGIGSFQHDLEFLQATVAYHQSLIHLCQDINE). Residues 283–303 (IFGVSLLSNFVSSSFIICFVG) traverse the membrane as a helical segment. Residues 304–314 (FQMTIGSKIDN) are Extracellular-facing. The chain crosses the membrane as a helical span at residues 315 to 335 (LVMLVLFLFCAMVQVFMIATH). Over 336-382 (AQRLVDASEQIGQAVYNHDWFRADLRYRKMLILIIKRAQQPSRLKAT) the chain is Cytoplasmic. The helical transmembrane segment at 383-403 (MFLNISLVTVSDLLQLSYKFF) threads the bilayer. Residues 404-412 (ALLRTMYVN) are Extracellular-facing.

Belongs to the insect chemoreceptor superfamily. Heteromeric odorant receptor channel (TC 1.A.69) family. Or49a subfamily. Interacts with Orco. Complexes exist early in the endomembrane system in olfactory sensory neurons (OSNs), coupling these complexes to the conserved ciliary trafficking pathway. In terms of tissue distribution, expressed in olfactory sensory neurons in the maxillary palp.

The protein resides in the cell membrane. Functionally, odorant receptor which mediates acceptance or avoidance behavior, depending on its substrates. The odorant receptor repertoire encodes a large collection of odor stimuli that vary widely in identity, intensity, and duration. May form a complex with Orco to form odorant-sensing units, providing sensitive and prolonged odorant signaling and calcium permeability. This chain is Putative odorant receptor 85d (Or85d), found in Drosophila melanogaster (Fruit fly).